A 445-amino-acid polypeptide reads, in one-letter code: UPF0210 protein STK_02450 (445 aa).

This sequence belongs to the UPF0210 family.

The polypeptide is UPF0210 protein STK_02450 (Sulfurisphaera tokodaii (strain DSM 16993 / JCM 10545 / NBRC 100140 / 7) (Sulfolobus tokodaii)).